The sequence spans 179 residues: Transcriptional regulator ICP22 homolog (179 aa).

A compositionally biased stretch (basic and acidic residues) spans 1–12; the sequence is MSRDRDRARPDT. Residues 1-40 form a disordered region; the sequence is MSRDRDRARPDTRLSSSDNESDDEDYQLPHSHPEYGSDSS.

It belongs to the herpesviridae ICP22 family.

In Gallid herpesvirus 2 (strain Chicken/Md5/ATCC VR-987) (GaHV-2), this protein is Transcriptional regulator ICP22 homolog (MDV088).